A 349-amino-acid polypeptide reads, in one-letter code: Hydroxymethylglutaryl-CoA synthase (349 aa).

The (3S)-3-hydroxy-3-methylglutaryl-CoA site is built by Asp30 and Ala31. Residue Glu82 is the Proton donor/acceptor of the active site. Cys114 and Thr155 together coordinate (3S)-3-hydroxy-3-methylglutaryl-CoA. The active-site Acyl-thioester intermediate is the Cys114. Arg203 contacts CoA. The (3S)-3-hydroxy-3-methylglutaryl-CoA site is built by Thr205 and His238. Catalysis depends on His238, which acts as the Proton donor/acceptor. Lys243 serves as a coordination point for CoA. Residues Asn270 and Ser300 each coordinate (3S)-3-hydroxy-3-methylglutaryl-CoA.

The protein belongs to the thiolase-like superfamily. Archaeal HMG-CoA synthase family. As to quaternary structure, interacts with acetoacetyl-CoA thiolase that catalyzes the precedent step in the pathway and with a DUF35 protein. The acetoacetyl-CoA thiolase/HMG-CoA synthase complex channels the intermediate via a fused CoA-binding site, which allows for efficient coupling of the endergonic thiolase reaction with the exergonic HMGCS reaction.

It carries out the reaction acetoacetyl-CoA + acetyl-CoA + H2O = (3S)-3-hydroxy-3-methylglutaryl-CoA + CoA + H(+). It functions in the pathway metabolic intermediate biosynthesis; (R)-mevalonate biosynthesis; (R)-mevalonate from acetyl-CoA: step 2/3. Catalyzes the condensation of acetyl-CoA with acetoacetyl-CoA to form 3-hydroxy-3-methylglutaryl-CoA (HMG-CoA). Functions in the mevalonate (MVA) pathway leading to isopentenyl diphosphate (IPP), a key precursor for the biosynthesis of isoprenoid compounds that are building blocks of archaeal membrane lipids. In Methanococcus maripaludis (strain DSM 14266 / JCM 13030 / NBRC 101832 / S2 / LL), this protein is Hydroxymethylglutaryl-CoA synthase.